A 597-amino-acid polypeptide reads, in one-letter code: Dynein intermediate chain 3, ciliary (597 aa).

WD repeat units lie at residues 159-210, 213-253, 260-301, 314-354, 361-400, 404-444, and 449-488; these read EIKR…KPEF, KPVS…QAVE, SHHD…EPTE, ENAQ…PPEK, EHIGPVYSLQRNPFFPKNFLTVGDWTARIWSEDIRDSSIM, YHMS…KDPT, and VSDDALHSLRVQDQGRLIATGSNSGTTTLLELSSGLCTMQ. Disordered regions lie at residues 512 to 546 and 562 to 597; these read RQRELRLKRQGASAQGQDDDEEGGPDEEEDLVAAA and AAQQAKLSEQDNKIIEEAEENNGSEKKDTENGEKEG. Residues 528-542 show a composition bias toward acidic residues; sequence QDDDEEGGPDEEEDL. A compositionally biased stretch (basic and acidic residues) spans 584 to 597; it reads GSEKKDTENGEKEG.

Belongs to the dynein intermediate chain family. Consists of at least two heavy chains (alpha and beta), three intermediate chains and several light chains.

The protein localises to the cytoplasm. The protein resides in the cytoskeleton. Its subcellular location is the cilium axoneme. May play a role in the regulation of dynein heavy chain activity. The protein is Dynein intermediate chain 3, ciliary of Heliocidaris crassispina (Sea urchin).